The sequence spans 456 residues: Probable galactarate/D-glucarate transporter GudP (456 aa).

The next 10 membrane-spanning stretches (helical) occupy residues 11–31 (YLILLMLFLVTTINYADRATI), 51–71 (YIFSAFGWAYVLGQIPGGWLL), 78–96 (KVYAGSIFTWSLFTLLQGY), 102–119 (ISTAVVLLFLLRFMVGLA), 246–266 (IYLGQFCINALTYFFLTWFPV), 280–300 (GIIASLPAICGFLGGVLGGVI), 317–337 (TPIVCGMVLSMSMIICNYVDA), 341–361 (VVCFMALAFFGKAIGALGWAV), 381–401 (FGNLSSISTPIIIGYIIAATG), and 408–428 (SSWVPTHSFAAISYLFIVGEI).

It belongs to the major facilitator superfamily. Phthalate permease family.

Its subcellular location is the cell inner membrane. The enzyme catalyses galactarate(in) + H(+)(in) = galactarate(out) + H(+)(out). It catalyses the reaction D-glucarate(in) + H(+)(in) = D-glucarate(out) + H(+)(out). Its function is as follows. Probably involved in the uptake of galactarate and/or D-glucarate. The chain is Probable galactarate/D-glucarate transporter GudP (gudP) from Pseudomonas putida (Arthrobacter siderocapsulatus).